Reading from the N-terminus, the 293-residue chain is L-ornithine N(alpha)-acyltransferase (293 aa).

The protein belongs to the acetyltransferase family. OlsB subfamily.

It carries out the reaction a (3R)-hydroxyacyl-[ACP] + L-ornithine = a lyso-ornithine lipid + holo-[ACP] + H(+). The protein operates within lipid metabolism. Its function is as follows. Catalyzes the first step in the biosynthesis of ornithine lipids, which are phosphorus-free membrane lipids. Catalyzes the 3-hydroxyacyl-acyl carrier protein-dependent acylation of ornithine to form lyso-ornithine lipid (LOL). The polypeptide is L-ornithine N(alpha)-acyltransferase (Agrobacterium fabrum (strain C58 / ATCC 33970) (Agrobacterium tumefaciens (strain C58))).